Consider the following 131-residue polypeptide: Small ribosomal subunit protein uS8c (131 aa).

Belongs to the universal ribosomal protein uS8 family. As to quaternary structure, part of the 30S ribosomal subunit.

It is found in the plastid. It localises to the chloroplast. Its function is as follows. One of the primary rRNA binding proteins, it binds directly to 16S rRNA central domain where it helps coordinate assembly of the platform of the 30S subunit. This is Small ribosomal subunit protein uS8c (rps8) from Phalaenopsis aphrodite subsp. formosana (Moth orchid).